The sequence spans 85 residues: Translational regulator CsrA (85 aa).

This sequence belongs to the CsrA/RsmA family. As to quaternary structure, homodimer; the beta-strands of each monomer intercalate to form a hydrophobic core, while the alpha-helices form wings that extend away from the core.

The protein localises to the cytoplasm. In terms of biological role, a translational regulator that binds mRNA to regulate translation initiation and/or mRNA stability. Usually binds in the 5'-UTR at or near the Shine-Dalgarno sequence preventing ribosome-binding, thus repressing translation. Its main target seems to be the major flagellin gene, while its function is anatagonized by FliW. The sequence is that of Translational regulator CsrA from Leifsonia xyli subsp. xyli (strain CTCB07).